Here is a 93-residue protein sequence, read N- to C-terminus: U12-lycotoxin-Ls1a (93 aa).

A signal peptide spans 1–18 (MKFAVILLFSLVVLTVAS). Positions 19-38 (ESVEEVRREIDIEDLPEQQR) are excised as a propeptide.

This sequence belongs to the neurotoxin 31 family. Contains 5 disulfide bonds. In terms of tissue distribution, expressed by the venom gland.

Its subcellular location is the secreted. This Lycosa singoriensis (Wolf spider) protein is U12-lycotoxin-Ls1a.